The chain runs to 152 residues: Endoribonuclease YbeY (152 aa).

Zn(2+) contacts are provided by His113, His117, and His123.

The protein belongs to the endoribonuclease YbeY family. It depends on Zn(2+) as a cofactor.

The protein resides in the cytoplasm. In terms of biological role, single strand-specific metallo-endoribonuclease involved in late-stage 70S ribosome quality control and in maturation of the 3' terminus of the 16S rRNA. This Acidovorax ebreus (strain TPSY) (Diaphorobacter sp. (strain TPSY)) protein is Endoribonuclease YbeY.